Reading from the N-terminus, the 549-residue chain is Chaperonin GroEL 2 (549 aa).

Residues 29–32 (TLGP), K50, 86–90 (DGTTT), G414, 477–479 (NAA), and D493 contribute to the ATP site.

This sequence belongs to the chaperonin (HSP60) family. In terms of assembly, forms a cylinder of 14 subunits composed of two heptameric rings stacked back-to-back. Interacts with the co-chaperonin GroES.

The protein resides in the cytoplasm. It catalyses the reaction ATP + H2O + a folded polypeptide = ADP + phosphate + an unfolded polypeptide.. Its function is as follows. Together with its co-chaperonin GroES, plays an essential role in assisting protein folding. The GroEL-GroES system forms a nano-cage that allows encapsulation of the non-native substrate proteins and provides a physical environment optimized to promote and accelerate protein folding. The chain is Chaperonin GroEL 2 from Myxococcus xanthus (strain DK1622).